Consider the following 143-residue polypeptide: Putative pre-16S rRNA nuclease (143 aa).

The protein belongs to the YqgF nuclease family.

It is found in the cytoplasm. Its function is as follows. Could be a nuclease involved in processing of the 5'-end of pre-16S rRNA. This Lactococcus lactis subsp. lactis (strain IL1403) (Streptococcus lactis) protein is Putative pre-16S rRNA nuclease (ybeB).